We begin with the raw amino-acid sequence, 1349 residues long: ABC multidrug transporter G (1349 aa).

An ABC transporter 1 domain is found at Arg-51 to Lys-299. Asn-144 carries N-linked (GlcNAc...) asparagine glycosylation. 4 helical membrane passes run Leu-407–Phe-427, Ser-436–Met-456, Ile-492–Leu-512, and Trp-523–Leu-543. Asn-549 carries an N-linked (GlcNAc...) asparagine glycan. Transmembrane regions (helical) follow at residues Ala-550 to Pro-570 and Trp-580 to Val-600. N-linked (GlcNAc...) asparagine glycosylation is present at Asn-649. Residues Phe-659–Leu-679 traverse the membrane as a helical segment. In terms of domain architecture, ABC transporter 2 spans Phe-721–Ala-963. Residue Gly-757–Thr-764 participates in ATP binding. Residue Asn-994 is glycosylated (N-linked (GlcNAc...) asparagine). A run of 6 helical transmembrane segments spans residues Val-1056 to Gly-1076, Phe-1085 to Phe-1105, Ile-1121 to Ala-1143, Met-1166 to Ala-1186, Phe-1193 to Val-1213, and Trp-1226 to Trp-1246. N-linked (GlcNAc...) asparagine glycosylation occurs at Asn-1287. The helical transmembrane segment at Thr-1318 to Leu-1338 threads the bilayer.

Belongs to the ABC transporter superfamily. ABCG family. PDR (TC 3.A.1.205) subfamily.

The protein localises to the cell membrane. ABC efflux transporter that seems not to be able to transport azoles, nor rhodamine 6G (R-6G), a known substrate for many ABC transporters. This is ABC multidrug transporter G from Aspergillus fumigatus (strain ATCC MYA-4609 / CBS 101355 / FGSC A1100 / Af293) (Neosartorya fumigata).